Reading from the N-terminus, the 132-residue chain is Transcriptional repressor SmtB homolog (132 aa).

Residues cysteine 20, histidine 26, cysteine 71, cysteine 73, aspartate 114, histidine 116, histidine 127, and glutamate 130 each contribute to the Zn(2+) site. The HTH arsR-type domain maps to 38-132; it reads MSLDQAQQMA…EVADHLQESD (95 aa). Positions 72–91 form a DNA-binding region, H-T-H motif; that stretch reads VCDLAAAMKVSESAVSHQLR.

In terms of assembly, homodimer.

Its function is as follows. Transcriptional repressor of the expression of the ziaA gene. Controls zinc homeostasis by triggering ZiaA-mediated efflux of excess zinc into the periplasm. This chain is Transcriptional repressor SmtB homolog (ziaR), found in Synechocystis sp. (strain ATCC 27184 / PCC 6803 / Kazusa).